Here is a 246-residue protein sequence, read N- to C-terminus: Apolipoprotein L domain-containing protein 1 (246 aa).

The next 2 membrane-spanning stretches (helical) occupy residues 50–72 (SLAA…IVGL) and 89–109 (GLGV…SLIF). A coiled-coil region spans residues 193–220 (LKAKIQKLSESLESCTGALDELSEQLES).

The protein belongs to the apolipoprotein L family. In terms of tissue distribution, present at low levels in brain vascular cells (at protein level).

It localises to the cell membrane. It is found in the cell junction. The protein resides in the cytoplasmic vesicle. The protein localises to the secretory vesicle. Functionally, is a modulator of endothelial barrier permeability, required for proper organization of endothelial cell-cell junctions and cytoskeleton. It also plays a role in the modulation of secretory autophagy. May affect blood-brain barrier permeability. This Rattus norvegicus (Rat) protein is Apolipoprotein L domain-containing protein 1 (Apold1).